A 245-amino-acid chain; its full sequence is Ribonuclease PH (245 aa).

Phosphate-binding positions include Arg93 and 131–133 (GTR).

Belongs to the RNase PH family. In terms of assembly, homohexameric ring arranged as a trimer of dimers.

It carries out the reaction tRNA(n+1) + phosphate = tRNA(n) + a ribonucleoside 5'-diphosphate. Phosphorolytic 3'-5' exoribonuclease that plays an important role in tRNA 3'-end maturation. Removes nucleotide residues following the 3'-CCA terminus of tRNAs; can also add nucleotides to the ends of RNA molecules by using nucleoside diphosphates as substrates, but this may not be physiologically important. Probably plays a role in initiation of 16S rRNA degradation (leading to ribosome degradation) during starvation. In Corynebacterium efficiens (strain DSM 44549 / YS-314 / AJ 12310 / JCM 11189 / NBRC 100395), this protein is Ribonuclease PH.